We begin with the raw amino-acid sequence, 940 residues long: Chromatin assembly factor 1 subunit FSM (940 aa).

Disordered regions lie at residues 317–473, 638–682, and 919–940; these read NVDD…DPCT, VDSD…FFVP, and KTTQ…PSSQ. Positions 320-329 are enriched in polar residues; that stretch reads DSQLQKNTST. Residues 329–439 are a coiled coil; sequence TNEKDTQKAQ…LKKQLAIQKQ (111 aa). Residues 330-429 show a composition bias toward basic and acidic residues; that stretch reads NEKDTQKAQK…QKRREKEAVQ (100 aa). Residues 430–440 show a composition bias toward low complexity; sequence LKKQLAIQKQA. Positions 445–461 are enriched in basic and acidic residues; it reads RFFKNKKDSEKLEKPGG. Residues 638–650 are compositionally biased toward acidic residues; it reads VDSDDEWEEEDPG.

Belongs to the CHAF1A family. Component of the chromatin assembly factor 1 (CAF-1) complex, composed of FSM (FAS1), FAS2 and MSI1. In embryo, expressed in leaf primordia, coleoptile and radicle. In seedlings, expressed in cell division zone of roots, SAM and leaf primordia. Expressed in floral organ primordia.

The protein localises to the nucleus. Its function is as follows. Component of the chromatin assembly factor complex (CAF-1) involved in chromatin assembly following DNA replication and DNA repair. Required for several aspects of development, including apical meristem maintenance by regulating the durations of the S- and G2-phases of the cell cycle through its chromatin assembly activity. The sequence is that of Chromatin assembly factor 1 subunit FSM (FSM) from Oryza sativa subsp. japonica (Rice).